Reading from the N-terminus, the 419-residue chain is Gustatory receptor for sugar taste 64c (419 aa).

Over 1 to 15 the chain is Cytoplasmic; sequence MQQSGQKGTRNTLQH. The chain crosses the membrane as a helical span at residues 16–36; the sequence is AIGPVLVIAQFFGVLPVAGVW. The Extracellular segment spans residues 37–48; sequence PSCRPERVRFRW. A helical membrane pass occupies residues 49 to 69; the sequence is ISLSLLAALILFVFSIVDCAL. The Cytoplasmic segment spans residues 70–82; sequence SSKVVFDHGLKIY. A helical membrane pass occupies residues 83–103; sequence TIGSLSFSVICIFCFGVFLLL. Residues 104–139 lie on the Extracellular side of the membrane; the sequence is SRRWPYIIRRTAECEQIFLEPEYDCSYGRGYSSRLR. Residues 140–160 form a helical membrane-spanning segment; it reads LWGVCMLVAALCEHSTYVGSA. Topologically, residues 161-204 are cytoplasmic; sequence LYNNHLAIVECKLDANFWQNYFQRERQQLFLIMHFTAWWIPFIE. A helical membrane pass occupies residues 205–225; sequence WTTLSMTFVWNFVDIFLILIC. The Extracellular segment spans residues 226 to 305; sequence RGMQMRFQQM…FQSKGNYADE (80 aa). A helical membrane pass occupies residues 306–326; the sequence is LYFWFCLSYVIIRVLNMMFAA. Topologically, residues 327–377 are cytoplasmic; that stretch reads SSIPQEAKEISYTLYEIPTEFWCVELRRLNEIFLSDHFALSGKGYFLLTRR. A helical transmembrane segment spans residues 378–398; sequence LIFAMAATLMVYELVLINQMA. Topologically, residues 399-419 are extracellular; that stretch reads GSEVQKSFCEGGVGSSKSIFS.

The protein belongs to the insect chemoreceptor superfamily. Gustatory receptor (GR) family. Gr5a subfamily. In terms of tissue distribution, expressed in Gr5a-expressing sugar-sensing cells.

It localises to the cell membrane. Functionally, one of the few identified sugar gustatory receptors identified so far and which promotes the starvation-induced increase of feeding motivation. This chain is Gustatory receptor for sugar taste 64c (Gr64c), found in Drosophila melanogaster (Fruit fly).